The chain runs to 204 residues: Large ribosomal subunit protein uL4 (204 aa).

The span at 42 to 55 (GSRQGSKAQKNRSA) shows a compositional bias: polar residues. Residues 42–85 (GSRQGSKAQKNRSAVSGGGKRPWAQKGTGRARAGTTRGPIWRSG) are disordered. Residues 68 to 79 (GTGRARAGTTRG) are compositionally biased toward low complexity.

This sequence belongs to the universal ribosomal protein uL4 family. Part of the 50S ribosomal subunit.

Its function is as follows. One of the primary rRNA binding proteins, this protein initially binds near the 5'-end of the 23S rRNA. It is important during the early stages of 50S assembly. It makes multiple contacts with different domains of the 23S rRNA in the assembled 50S subunit and ribosome. Forms part of the polypeptide exit tunnel. The sequence is that of Large ribosomal subunit protein uL4 from Vesicomyosocius okutanii subsp. Calyptogena okutanii (strain HA).